The sequence spans 1254 residues: Unconventional myosin-VI (1254 aa).

In terms of domain architecture, Myosin N-terminal SH3-like spans 2-53 (EDGKPVWAPHPTDGFQVGNIVDIGPDSLTIEPLNQKGKTFLALINQVFPAEE). Positions 57-772 (KDVEDNCSLM…KFAEFDQIMK (716 aa)) constitute a Myosin motor domain. 151 to 158 (GESGAGKT) contributes to the ATP binding site. Phosphoserine is present on serine 267. A responsible for slow ATPase activity region spans residues 273-317 (YLNRGCTRYFANKETDKQILQNRKSPEYLKAGSLKDPLLDDHGDF). Threonine 406 is subject to Phosphothreonine. Serine 605 is modified (phosphoserine). Positions 666-673 (FIRCIKPN) are actin-binding. The required for binding calmodulin stretch occupies residues 783–811 (KRVNHWLICSRWKKVQWCSLSVIKLKNKI). An IQ domain is found at 814 to 843 (RAEACIKMQKTIRMWLCKRRHKPRIDGLVK). Residues 836-917 (PRIDGLVKVG…AVLLSALQKK (82 aa)) form a three-helix bundle region. The SAH stretch occupies residues 918–985 (KQQEEEAERL…EDDEKRIQAE (68 aa)). Residues 935–956 (EKERKRREEDEQRRRKEEEERR) are disordered. A Phosphoserine modification is found at serine 1026. Positions 1037–1245 (RGPAVQATKA…ESRQARPTYA (209 aa)) are interaction with TAX1BP1 and CALCOCO2/NDP52. The tract at residues 1085 to 1087 (RRL) is interaction with OPTN. A disordered region spans residues 1096–1117 (KNKKRNTETEQRAPKSVTDYAQ). The segment at 1117–1245 (QQNPAVQLPA…ESRQARPTYA (129 aa)) is interaction with TOM1.

The protein belongs to the TRAFAC class myosin-kinesin ATPase superfamily. Myosin family. Homodimer; dimerization seems to implicate the unfolding of the three-helix bundle region creating an additional calmodulin binding site, and cargo binding. Component of the DISP/DOCK7-induced septin displacement complex, at least composed of DOCK7, LRCH3 and MYO6. Able to function as a monomer under specific conditions in vitro. Forms a complex with CFTR and DAB2 in the apical membrane of epithelial cells. Binding to calmodulin through a unique insert, not found in other myosins, located in the neck region between the motor domain and the IQ domain appears to contribute to the directionality reversal. This interaction occurs only if the C-terminal lobe of calmodulin is occupied by calcium. Interaction with F-actin/ACTN1 occurs only at the apical brush border domain of the proximal tubule cells. Interacts with DAB2. In vitro, the C-terminal globular tail binds a C-terminal region of DAB2. Interacts with CFTR. Interacts with CABP5. Interacts (via residues 1117-1245) with TOM1 (via residues 392-463). Interacts (via residues 1060-1285) with OPTN. Interacts (via residues 1060-1285) with TAX1BP1 and CALCOCO2/NDP52. Interacts with TOM1L2. Interacts with CLIC5; may work together in a complex which also includes RDX and MYO6 to stabilize linkages between the plasma membrane and subjacent actin cytoskeleton at the base of stereocilia. Post-translationally, phosphorylation in the motor domain, induced by EGF, results in translocation of MYO6 from the cell surface to membrane ruffles and affects F-actin dynamics. Phosphorylated in vitro by p21-activated kinase (PAK). In terms of tissue distribution, expressed in all tissues examined including kidney cortex, intestinal mucosa, liver, lung, heart, jowl muscle, brain cortex and medulla, and in the epithelial cell line, LLC-PK1 (at protein level). In the kidney, located to the brush border of adult kidney proximal tubule cells.

Its subcellular location is the golgi apparatus. The protein resides in the trans-Golgi network membrane. It localises to the nucleus. The protein localises to the cytoplasm. It is found in the perinuclear region. Its subcellular location is the membrane. The protein resides in the clathrin-coated pit. It localises to the cytoplasmic vesicle. The protein localises to the clathrin-coated vesicle. It is found in the cell projection. Its subcellular location is the filopodium. The protein resides in the ruffle membrane. It localises to the microvillus. The protein localises to the cytosol. Myosins are actin-based motor molecules with ATPase activity. Unconventional myosins serve in intracellular movements. Myosin 6 is a reverse-direction motor protein that moves towards the minus-end of actin filaments. Has slow rate of actin-activated ADP release due to weak ATP binding. Functions in a variety of intracellular processes such as vesicular membrane trafficking and cell migration. Required for the structural integrity of the Golgi apparatus via the p53-dependent pro-survival pathway. Appears to be involved in a very early step of clathrin-mediated endocytosis in polarized epithelial cells. Together with TOM1, mediates delivery of endocytic cargo to autophagosomes thereby promoting autophagosome maturation and driving fusion with lysosomes. Links TOM1 with autophagy receptors, such as TAX1BP1; CALCOCO2/NDP52 and OPTN. May act as a regulator of F-actin dynamics. As part of the DISP complex, may regulate the association of septins with actin and thereby regulate the actin cytoskeleton. May play a role in transporting DAB2 from the plasma membrane to specific cellular targets. May play a role in the extension and network organization of neurites. Required for structural integrity of inner ear hair cells. Required for the correct localization of CLIC5 and RDX at the stereocilium base. Modulates RNA polymerase II-dependent transcription. This Sus scrofa (Pig) protein is Unconventional myosin-VI (MYO6).